Consider the following 151-residue polypeptide: UPF0208 membrane protein CKO_00500 (151 aa).

2 consecutive transmembrane segments (helical) span residues 46 to 65 and 69 to 91; these read YAIRFMPPIAVFTLCWQIAL and LGPAVATALFALSLPMQGMWWLG.

Belongs to the UPF0208 family.

The protein localises to the cell inner membrane. This Citrobacter koseri (strain ATCC BAA-895 / CDC 4225-83 / SGSC4696) protein is UPF0208 membrane protein CKO_00500.